Here is a 260-residue protein sequence, read N- to C-terminus: G patch domain-containing protein 11 (260 aa).

A coiled-coil region spans residues 25 to 61 (MLRQIREARRKEEKRQEANLKNRQKSIKEEEQERRDM). Residues 33 to 60 (RRKEEKRQEANLKNRQKSIKEEEQERRD) are disordered. The 47-residue stretch at 69–115 (CENKGFALLQKMGYKSGQALGKSGDGIVEPIPLNVKTGKSGIGHETL) folds into the G-patch domain. K123 carries the post-translational modification N6-acetyllysine. The segment at 187-212 (WLRPEEETEEETEEEKEQDEDEYKSE) is disordered. The segment covering 192 to 210 (EETEEETEEEKEQDEDEYK) has biased composition (acidic residues).

It belongs to the GPATCH11 family.

It is found in the chromosome. Its subcellular location is the centromere. The protein localises to the kinetochore. This Bos taurus (Bovine) protein is G patch domain-containing protein 11 (GPATCH11).